The sequence spans 810 residues: MSYDHKAIEKRWQTYWDEHKTFKTAPETSGKPKYYVMNMFPYPSGQGLHVGHPESYTATDIMARFNRMRGFNVLQPMGWDAFGLPAEQYAIKTGHNPADFTNENIKHFKKQVKSLGFSYDWDREINTTDPEYYKWTQWIFEQLYKKGLAYEDEIMVNWAPDFPGGGIVVANEEVIDGKTERGSYPVYRVPMKQWVLRITKYAERLLSDLDDLDWPEAIKEQQRNWIGKSTGAAVFFKVDGKSDYQVEVYTTRPDTLFGASYMVLAPEHDLVDKITTSECRADVDAYKAKIASKSDLERTDLNREKTGAFTGAYGINPVNGEKIPIWIADYVLSSYGTGAIMAVPAHDTRDYEFAKKFDLPIRQVIKGGDISKEAFTGDGTHINSAFLDVLDKKQAIEKIIDWLEEHDAGHKQVNYKLRDWIFSRQRYWGEPIPVIHWEDGKQTLVPESELPLRLPHLNQDQMKPSGTGESPLANAKSWLEVTRQDGVKGRRETNTMPQWAGSSWYFLRYIDPHNDKVLADPEKLKYWMNVDLYVGGAEHAVLHLLYARFWHKFLYDLGIVPTKEPFQKLVNQGMILGTNHEKMSKSKGNVVNPDEIVDSYGADALRVYEMFMGPLTQSKPWSTESLAGIRRYLDRVWRIFTSDGDGINPIIVSENDHKLDKIFNQTVKKVTEDYAAMRFNTAISQMMVFINETFKAEKLPKKYMNAFLQLLNPVAPHITEELWQRMGHQETIAYATWPTYDESQIIEKQIEMAVQINGKVRAKINTPVDISRDELAKMATDNPDVKKQVADKNIVKIIAIPGKIINIVVK.

Positions 41-52 match the 'HIGH' region motif; sequence PYPSGQGLHVGH. Positions 582–586 match the 'KMSKS' region motif; the sequence is KMSKS. Lys585 provides a ligand contact to ATP.

This sequence belongs to the class-I aminoacyl-tRNA synthetase family.

The protein resides in the cytoplasm. The catalysed reaction is tRNA(Leu) + L-leucine + ATP = L-leucyl-tRNA(Leu) + AMP + diphosphate. The protein is Leucine--tRNA ligase of Oenococcus oeni (strain ATCC BAA-331 / PSU-1).